The chain runs to 643 residues: Fructose-1,6-bisphosphatase class 3 (643 aa).

Belongs to the FBPase class 3 family. Requires Mn(2+) as cofactor.

The enzyme catalyses beta-D-fructose 1,6-bisphosphate + H2O = beta-D-fructose 6-phosphate + phosphate. The protein operates within carbohydrate biosynthesis; gluconeogenesis. The chain is Fructose-1,6-bisphosphatase class 3 from Lacticaseibacillus paracasei (strain ATCC 334 / BCRC 17002 / CCUG 31169 / CIP 107868 / KCTC 3260 / NRRL B-441) (Lactobacillus paracasei).